Here is a 149-residue protein sequence, read N- to C-terminus: Large ribosomal subunit protein bL9 (149 aa).

The protein belongs to the bacterial ribosomal protein bL9 family.

Binds to the 23S rRNA. The chain is Large ribosomal subunit protein bL9 from Enterobacter sp. (strain 638).